A 737-amino-acid chain; its full sequence is Polyribonucleotide nucleotidyltransferase (737 aa).

Mg(2+) contacts are provided by aspartate 489 and aspartate 495. The region spanning 556–615 (PKIDTIKIDVDKIKIVIGKGGETIDKIIAETGVKIDIDEEGNVSIYSSDQDAINRAKEII) is the KH domain. One can recognise an S1 motif domain in the interval 625 to 693 (DEVYRAKVVR…EKGRIDASMK (69 aa)). Positions 691–737 (SMKALLPRPPKPEHDEKGEKSERPHRPRHQKDYKPKKEFTETSKDSE) are disordered. Basic and acidic residues predominate over residues 700–737 (PKPEHDEKGEKSERPHRPRHQKDYKPKKEFTETSKDSE).

It belongs to the polyribonucleotide nucleotidyltransferase family. The cofactor is Mg(2+).

Its subcellular location is the cytoplasm. It carries out the reaction RNA(n+1) + phosphate = RNA(n) + a ribonucleoside 5'-diphosphate. In terms of biological role, involved in mRNA degradation. Catalyzes the phosphorolysis of single-stranded polyribonucleotides processively in the 3'- to 5'-direction. This is Polyribonucleotide nucleotidyltransferase from Streptococcus pneumoniae serotype 4 (strain ATCC BAA-334 / TIGR4).